The primary structure comprises 993 residues: Replication protein 1a (993 aa).

Positions 50–409 are methyltransferase; that stretch reads RNVLSVKDSE…TIVINGMSMQ (360 aa). Positions 72-290 constitute an Alphavirus-like MT domain; it reads HLTQQEFAPH…HDWENIKSFL (219 aa). The tract at residues 537-565 is disordered; it reads LAQPVDEVSDSPEVPSSTPDDTADVCGKE. Residues 687–838 form the (+)RNA virus helicase ATP-binding domain; that stretch reads CVICNSESLS…KIIPDETSDA (152 aa). Residues 712–975 form an ATP-dependent helicase region; it reads VDGVAGCGKT…LTRHKVTFRY (264 aa). Residue 714–721 coordinates ATP; the sequence is GVAGCGKT. One can recognise a (+)RNA virus helicase C-terminal domain in the interval 839–993; it reads DTTFRSPQDV…DLIAECIARA (155 aa).

This sequence belongs to the bromoviridae replication protein 1a family. As to quaternary structure, interacts with RNA-directed RNA polymerase 2a.

It is found in the host endoplasmic reticulum membrane. Involved in the virus replication. Contains a helicase domain and a methyltransferase domain. The methyltransferase domain is probably involved in viral RNA capping. Involved in the formation of ER membrane spherular invaginations in which RNA replication complexes form. The protein is Replication protein 1a of Cucumber mosaic virus (strain O) (CMV).